The sequence spans 782 residues: Endonuclease MutS2 (782 aa).

336 to 343 (GPNTGGKT) lines the ATP pocket. One can recognise a Smr domain in the interval 707 to 782 (LDLRGYRYDE…GFGVTVVEIK (76 aa)).

This sequence belongs to the DNA mismatch repair MutS family. MutS2 subfamily. Homodimer. Binds to stalled ribosomes, contacting rRNA.

In terms of biological role, endonuclease that is involved in the suppression of homologous recombination and thus may have a key role in the control of bacterial genetic diversity. Its function is as follows. Acts as a ribosome collision sensor, splitting the ribosome into its 2 subunits. Detects stalled/collided 70S ribosomes which it binds and splits by an ATP-hydrolysis driven conformational change. Acts upstream of the ribosome quality control system (RQC), a ribosome-associated complex that mediates the extraction of incompletely synthesized nascent chains from stalled ribosomes and their subsequent degradation. Probably generates substrates for RQC. The chain is Endonuclease MutS2 from Staphylococcus saprophyticus subsp. saprophyticus (strain ATCC 15305 / DSM 20229 / NCIMB 8711 / NCTC 7292 / S-41).